The sequence spans 381 residues: DNA repair protein RAD51 homolog 3 (381 aa).

The disordered stretch occupies residues 1 to 24 (MDEDINKDTNNNNNTTDSNNNNNN). Positions 8-24 (DTNNNNNTTDSNNNNNN) are enriched in low complexity. Residue 89 to 96 (GVPGIGKT) participates in ATP binding. The segment at 313 to 381 (GFNHPPPLNP…NDENEMYIEN (69 aa)) is disordered. The stretch at 323–377 (EDQEQEKEKEKRKKKNNNNNNNNNNNNNNNNNNNNNNNNNNNNNNNNKNNDENEM) forms a coiled coil. Over residues 339-370 (NNNNNNNNNNNNNNNNNNNNNNNNNNNNNNNK) the composition is skewed to low complexity.

This sequence belongs to the RecA family. RAD51 subfamily.

It is found in the nucleus. Involved in the homologous recombination repair (HRR) pathway of double-stranded DNA breaks arising during DNA replication or induced by DNA-damaging agents. The protein is DNA repair protein RAD51 homolog 3 (rad51c) of Dictyostelium discoideum (Social amoeba).